The chain runs to 514 residues: Peptide chain release factor 3 (514 aa).

In terms of domain architecture, tr-type G spans 8-268; that stretch reads KKRRTFAIIS…IFLKFAPEPH (261 aa). GTP is bound by residues 17–24, 85–89, and 139–142; these read SHPDAGKT, DTPGH, and NKLD.

This sequence belongs to the TRAFAC class translation factor GTPase superfamily. Classic translation factor GTPase family. PrfC subfamily.

The protein resides in the cytoplasm. In terms of biological role, increases the formation of ribosomal termination complexes and stimulates activities of RF-1 and RF-2. It binds guanine nucleotides and has strong preference for UGA stop codons. It may interact directly with the ribosome. The stimulation of RF-1 and RF-2 is significantly reduced by GTP and GDP, but not by GMP. The protein is Peptide chain release factor 3 of Streptococcus pneumoniae serotype 2 (strain D39 / NCTC 7466).